Here is a 235-residue protein sequence, read N- to C-terminus: Putative HAD-hydrolase YfnB (235 aa).

Aspartate 10 serves as the catalytic Nucleophile.

This sequence belongs to the HAD-like hydrolase superfamily. YjjG family.

The chain is Putative HAD-hydrolase YfnB (yfnB) from Bacillus subtilis (strain 168).